A 620-amino-acid polypeptide reads, in one-letter code: 1-deoxy-D-xylulose-5-phosphate synthase (620 aa).

Residues His80 and 121–123 each bind thiamine diphosphate; that span reads GHS. A Mg(2+)-binding site is contributed by Asp152. Thiamine diphosphate is bound by residues 153–154, Asn181, Tyr288, and Glu370; that span reads GA. Asn181 lines the Mg(2+) pocket.

It belongs to the transketolase family. DXPS subfamily. As to quaternary structure, homodimer. It depends on Mg(2+) as a cofactor. Requires thiamine diphosphate as cofactor.

The catalysed reaction is D-glyceraldehyde 3-phosphate + pyruvate + H(+) = 1-deoxy-D-xylulose 5-phosphate + CO2. The protein operates within metabolic intermediate biosynthesis; 1-deoxy-D-xylulose 5-phosphate biosynthesis; 1-deoxy-D-xylulose 5-phosphate from D-glyceraldehyde 3-phosphate and pyruvate: step 1/1. In terms of biological role, catalyzes the acyloin condensation reaction between C atoms 2 and 3 of pyruvate and glyceraldehyde 3-phosphate to yield 1-deoxy-D-xylulose-5-phosphate (DXP). The sequence is that of 1-deoxy-D-xylulose-5-phosphate synthase from Escherichia fergusonii (strain ATCC 35469 / DSM 13698 / CCUG 18766 / IAM 14443 / JCM 21226 / LMG 7866 / NBRC 102419 / NCTC 12128 / CDC 0568-73).